The primary structure comprises 312 residues: Glyoxylate/hydroxypyruvate reductase A (312 aa).

R227 is an active-site residue. The Proton donor role is filled by H275.

It belongs to the D-isomer specific 2-hydroxyacid dehydrogenase family. GhrA subfamily.

It localises to the cytoplasm. The catalysed reaction is glycolate + NADP(+) = glyoxylate + NADPH + H(+). It carries out the reaction (R)-glycerate + NAD(+) = 3-hydroxypyruvate + NADH + H(+). The enzyme catalyses (R)-glycerate + NADP(+) = 3-hydroxypyruvate + NADPH + H(+). Its function is as follows. Catalyzes the NADPH-dependent reduction of glyoxylate and hydroxypyruvate into glycolate and glycerate, respectively. The sequence is that of Glyoxylate/hydroxypyruvate reductase A from Shigella dysenteriae serotype 1 (strain Sd197).